Reading from the N-terminus, the 674-residue chain is MKLNALSTATHGSRSSPVKLWKFSTSFLLAASIIVSGQSWAAETAKPATDATKAANDALLKELPFDDKTSFDLAHKGFIAPLPAEPIKGEKGNMIWDPSKYGFIKEGEAAPDTTNPSLWRQSQLINISGLFEVTDGIYQVRNYDLSNMTIVEGKDGITIFDPLISQETAKAALDLYYKHRPKKPVVAVIYTHSHVDHYGGVRGVVDEADVKAGKVKIYAPLGFLEHAVAENVMAGTAMSRRASYMYGNLLPPDAKGQLGAGLGTTTSAGTVTLIPPTDIIKETGETHVIDGLTYEFMYAPGSEAPAEMLYYIKEKKALNAAEDSTHTLHNTYSLRGAKIRDPLAWSKYLNEALKLWGDDVQVMYAMHHWPVWGNKEVREQLSLQRDMYRYINDETLRLANKGYTMTEIAEQVKLPKKIATKFSNRGYYGSLNHNVKATYVLYLGWFIGNPATLWELPPADKAKRYVEMMGGADAVLKKAKEYYDKGDFRWVAEVVNHVVFAEPNNQAAKNMQADALEQLGYQAESGPWRNFYLTGAQELRNGVQQLPTPDTASPDTVKAMDLDLFFDFLAMRLKGPDVADKHITLNLDFTDLKQKYTLEMVNGVLNHTEGMQAKNADATVTLTRETLNNVMLKQTTLKDAESSGDIKIEGDKGKLEELMSYMDNFDFWFNIVTP.

The N-terminal stretch at 1–41 is a signal peptide; it reads MKLNALSTATHGSRSSPVKLWKFSTSFLLAASIIVSGQSWA. Residues H192, H194, D196, H197, E303, and E322 each contribute to the Zn(2+) site. Sulfate contacts are provided by residues 330-335 and R340; that span reads NTYSLR. Zn(2+) is bound at residue H367. Y428 is a sulfate binding site.

The protein belongs to the metallo-beta-lactamase superfamily. Type III sulfatase family. In terms of assembly, homodimer. The cofactor is Zn(2+).

The protein resides in the periplasm. The enzyme catalyses a primary linear alkyl sulfate ester + H2O = a primary alcohol + sulfate + H(+). Its activity is regulated as follows. Inhibited by EDTA. Slightly activated in the presence of Ca(2+). Functionally, alkylsulfatase that cleaves primary alkyl sulfates such as sodium octyl sulfate and the widely used detergent sodium dodecyl sulfate (SDS). This is Linear primary-alkylsulfatase from Pseudomonas sp.